Reading from the N-terminus, the 364-residue chain is Aminomethyltransferase (364 aa).

The protein belongs to the GcvT family. In terms of assembly, the glycine cleavage system is composed of four proteins: P, T, L and H.

It carries out the reaction N(6)-[(R)-S(8)-aminomethyldihydrolipoyl]-L-lysyl-[protein] + (6S)-5,6,7,8-tetrahydrofolate = N(6)-[(R)-dihydrolipoyl]-L-lysyl-[protein] + (6R)-5,10-methylene-5,6,7,8-tetrahydrofolate + NH4(+). The glycine cleavage system catalyzes the degradation of glycine. The sequence is that of Aminomethyltransferase from Salmonella paratyphi C (strain RKS4594).